The primary structure comprises 223 residues: Small ribosomal subunit protein uS3 (223 aa).

The KH type-2 domain occupies 39–107; sequence VREFLHKKLA…PVQINIEEVR (69 aa).

This sequence belongs to the universal ribosomal protein uS3 family. Part of the 30S ribosomal subunit. Forms a tight complex with proteins S10 and S14.

In terms of biological role, binds the lower part of the 30S subunit head. Binds mRNA in the 70S ribosome, positioning it for translation. The sequence is that of Small ribosomal subunit protein uS3 from Francisella tularensis subsp. mediasiatica (strain FSC147).